Here is a 348-residue protein sequence, read N- to C-terminus: Isopentenyl-diphosphate delta-isomerase (348 aa).

A substrate-binding site is contributed by 9–10 (RK). FMN is bound by residues 68–70 (AMT), Ser-98, and Asn-127. Residue Gln-157 participates in substrate binding. Glu-158 lines the Mg(2+) pocket. FMN-binding positions include Lys-188, Ser-213, Thr-218, and 286-287 (AG).

The protein belongs to the IPP isomerase type 2 family. Homooctamer. Dimer of tetramers. The cofactor is FMN. Requires NADPH as cofactor. It depends on Mg(2+) as a cofactor.

The protein resides in the cytoplasm. It carries out the reaction isopentenyl diphosphate = dimethylallyl diphosphate. In terms of biological role, involved in the biosynthesis of isoprenoids. Catalyzes the 1,3-allylic rearrangement of the homoallylic substrate isopentenyl (IPP) to its allylic isomer, dimethylallyl diphosphate (DMAPP). This Limosilactobacillus reuteri (strain DSM 20016) (Lactobacillus reuteri) protein is Isopentenyl-diphosphate delta-isomerase.